The sequence spans 287 residues: 4-hydroxybenzoate octaprenyltransferase (287 aa).

9 helical membrane-spanning segments follow: residues 22-42, 45-65, 95-115, 116-136, 140-160, 162-182, 214-234, 237-257, and 264-284; these read IGTY…SDGW, LQLL…GCVI, AINL…MLSW, STIY…FMKR, LPQL…FSEA, GEIP…TIAY, IGFL…ILAF, PYQL…LLIV, and CFQA…GIAI.

This sequence belongs to the UbiA prenyltransferase family. Requires Mg(2+) as cofactor.

The protein localises to the cell inner membrane. It catalyses the reaction all-trans-octaprenyl diphosphate + 4-hydroxybenzoate = 4-hydroxy-3-(all-trans-octaprenyl)benzoate + diphosphate. The protein operates within cofactor biosynthesis; ubiquinone biosynthesis. Catalyzes the prenylation of para-hydroxybenzoate (PHB) with an all-trans polyprenyl group. Mediates the second step in the final reaction sequence of ubiquinone-8 (UQ-8) biosynthesis, which is the condensation of the polyisoprenoid side chain with PHB, generating the first membrane-bound Q intermediate 3-octaprenyl-4-hydroxybenzoate. This Colwellia psychrerythraea (strain 34H / ATCC BAA-681) (Vibrio psychroerythus) protein is 4-hydroxybenzoate octaprenyltransferase.